The following is a 518-amino-acid chain: Circadian clock oscillator protein KaiC (518 aa).

The 247-residue stretch at 1 to 247 (MTNLPEHQSS…FTINNGINIF (247 aa)) folds into the KaiC 1 domain. Positions 49, 50, 51, 52, 53, 54, and 55 each coordinate ATP. Thr-54 is a binding site for Mg(2+). The Proton acceptor in CI (KaiC 1) role is filled by Glu-78. Ser-90 serves as a coordination point for ATP. A B-loop, required to bind KaiB and SasA region spans residues 116–123 (QEVAGDFD). Positions 225, 226, 227, 229, and 231 each coordinate ATP. The interval 248 to 260 (PLGAMRLTQRSSN) is linker. The region spanning 261 to 518 (VRVSSGVKTL…AKGMQDLESE (258 aa)) is the KaiC 2 domain. ATP is bound by residues Thr-290, Gly-291, Thr-292, Gly-293, Lys-294, Thr-295, and Leu-296. Thr-295 lines the Mg(2+) pocket. Glu-318 contacts Mg(2+). Glu-318 functions as the Proton acceptor in CII (KaiC 2) in the catalytic mechanism. Trp-331 contacts ATP. Phosphoserine; by autocatalysis is present on Ser-431. Position 432 is a phosphothreonine; by autocatalysis (Thr-432). Residues Arg-451, Lys-457, Met-458, Arg-459, Ser-461, His-463, and Lys-465 each contribute to the ATP site. The A-loop, interacts with KaiA stretch occupies residues 488 to 497 (GIISGTPTRI).

This sequence belongs to the KaiC family. Homohexamer resembling 2 stacked donuts rings with a central pore nearly blocked on one side; hexamerization is dependent on ATP-binding. Binds 2 ATP per monomer, at the subunit interface on each ring. The KaiABC complex composition changes during the circadian cycle to control KaiC phosphorylation. Complexes KaiC(6), KaiA(2-4):KaiC(6), KaiB(6):KaiC(6) and KaiC(6):KaiB(6):KaiA(12) are among the most important forms, many form cooperatively. Interacts with SasA, probably as 1 SasA trimer:1 KaiC homohexamer, has highest affinity for unphosphorylated SasA. The CI domain binds to KaiB and SasA; as they have a similar fold they compete for the same site on CI. KaiB assumes a thioredoxin-like form called KaiB(fs) when bound to KaiC. Mg(2+) serves as cofactor. Phosphorylated on serine/threonine residues by autocatalysis. Both phosphorylated and unphosphorylated forms exist. Both autophosphorylates and autodephosphorylates. Phosphorylated form correlates with clock speed. In terms of processing, phosphorylated on serine and threonine residues by autocatalysis. Has a 4 step phosphorylation cycle; the autokinase acts first on Thr-432, then Ser-431. When Ser-431 is modified KaiC switches to an autophosphatase mode, acting first on phospho-Thr-432 then phospho-Ser-431.

The catalysed reaction is L-seryl-[protein] + ATP = O-phospho-L-seryl-[protein] + ADP + H(+). It carries out the reaction L-threonyl-[protein] + ATP = O-phospho-L-threonyl-[protein] + ADP + H(+). It catalyses the reaction ATP + H2O = ADP + phosphate + H(+). The interaction with KaiA enhances its phosphorylation status, while the interaction with KaiB decreases it. Its function is as follows. Central component of the KaiABC oscillator complex, which constitutes the main circadian regulator in cyanobacteria. Complex composition changes during the circadian cycle to control KaiC phosphorylation. KaiA stimulates KaiC autophosphorylation, while KaiB sequesters KaiA, leading to KaiC autodephosphorylation. Clock output pathways impact the RpaA transcriptional regulator. KaiC enhances the autophosphorylation activity of SasA, which then transfers its phosphate group to RpaA to activate it. KaiB and KaiC together enhance the phospho-RpaA dephosphatase activity of CikA. Stimulates SasA autophosphorylation. Fully phosphorylated KaiC (tested with phosphomimetic Asp-431-432-Asp) is the best stimulant, requires the ATPase activity of the CII domain. Unphosphorylated SasA associates with KaiC and its autophosphorylation activity is enhanced. Phospho-SasA is released and associates with RpaA, transferring its phosphate group. Formation of the KaiA:KaiB complex is promoted by KaiC, helping switch KaiC from its autophosphorylation to autodephosphatase function. Functionally, has a weak, temperature-independent ATPase activity (about 14 molecules of ATP per day) that defines the circadian period. ATPase activity is mostly contributed by the CI domain; the CII domain augments the activity. The addition of KaiA increases activity. ATPase is inhibited during the KaiC phosphorylating phase and activated during the KaiC dephosphorylating phase. This Thermosynechococcus vestitus (strain NIES-2133 / IAM M-273 / BP-1) protein is Circadian clock oscillator protein KaiC.